The primary structure comprises 432 residues: Glutamate-1-semialdehyde 2,1-aminomutase (432 aa).

N6-(pyridoxal phosphate)lysine is present on Lys-272.

Belongs to the class-III pyridoxal-phosphate-dependent aminotransferase family. HemL subfamily. In terms of assembly, homodimer. Requires pyridoxal 5'-phosphate as cofactor.

It is found in the cytoplasm. The catalysed reaction is (S)-4-amino-5-oxopentanoate = 5-aminolevulinate. It functions in the pathway porphyrin-containing compound metabolism; protoporphyrin-IX biosynthesis; 5-aminolevulinate from L-glutamyl-tRNA(Glu): step 2/2. It participates in porphyrin-containing compound metabolism; chlorophyll biosynthesis. This chain is Glutamate-1-semialdehyde 2,1-aminomutase, found in Nostoc punctiforme (strain ATCC 29133 / PCC 73102).